A 470-amino-acid chain; its full sequence is ATP synthase subunit beta (470 aa).

157 to 164 lines the ATP pocket; sequence GGAGVGKT.

Belongs to the ATPase alpha/beta chains family. In terms of assembly, F-type ATPases have 2 components, CF(1) - the catalytic core - and CF(0) - the membrane proton channel. CF(1) has five subunits: alpha(3), beta(3), gamma(1), delta(1), epsilon(1). CF(0) has three main subunits: a(1), b(2) and c(9-12). The alpha and beta chains form an alternating ring which encloses part of the gamma chain. CF(1) is attached to CF(0) by a central stalk formed by the gamma and epsilon chains, while a peripheral stalk is formed by the delta and b chains.

Its subcellular location is the cell membrane. The catalysed reaction is ATP + H2O + 4 H(+)(in) = ADP + phosphate + 5 H(+)(out). Functionally, produces ATP from ADP in the presence of a proton gradient across the membrane. The catalytic sites are hosted primarily by the beta subunits. This chain is ATP synthase subunit beta, found in Pelotomaculum thermopropionicum (strain DSM 13744 / JCM 10971 / SI).